Reading from the N-terminus, the 271-residue chain is Ribosome-recycling factor, chloroplastic (271 aa).

Residues Met-1–Cys-78 constitute a chloroplast transit peptide. Positions Ala-213–Ile-260 form a coiled coil.

It belongs to the RRF family. As to quaternary structure, modeling onto the 70S ribosome suggests it binds to PSRP1. Restricted to photosynthetic tissues.

It is found in the plastid. The protein resides in the chloroplast stroma. In terms of biological role, responsible for the release of ribosomes from messenger RNA at the termination of chloroplastic protein biosynthesis. In Spinacia oleracea (Spinach), this protein is Ribosome-recycling factor, chloroplastic (RRF).